The chain runs to 183 residues: Threonylcarbamoyl-AMP synthase (183 aa).

In terms of domain architecture, YrdC-like spans 1-183; it reads MNREQIANAL…LRTNQLFRQG (183 aa).

Belongs to the SUA5 family. TsaC subfamily.

Its subcellular location is the cytoplasm. It catalyses the reaction L-threonine + hydrogencarbonate + ATP = L-threonylcarbamoyladenylate + diphosphate + H2O. In terms of biological role, required for the formation of a threonylcarbamoyl group on adenosine at position 37 (t(6)A37) in tRNAs that read codons beginning with adenine. Catalyzes the conversion of L-threonine, HCO(3)(-)/CO(2) and ATP to give threonylcarbamoyl-AMP (TC-AMP) as the acyladenylate intermediate, with the release of diphosphate. In Haemophilus influenzae (strain PittEE), this protein is Threonylcarbamoyl-AMP synthase.